The sequence spans 292 residues: Phosphatidylglycerol--prolipoprotein diacylglyceryl transferase (292 aa).

7 helical membrane-spanning segments follow: residues Val-21–Ala-41, Leu-60–Tyr-80, Gly-98–His-118, Phe-124–Leu-144, Ser-198–Ile-218, Gly-225–Phe-245, and Ile-258–Trp-278. Arg-143 is an a 1,2-diacyl-sn-glycero-3-phospho-(1'-sn-glycerol) binding site.

Belongs to the Lgt family.

The protein localises to the cell inner membrane. The enzyme catalyses L-cysteinyl-[prolipoprotein] + a 1,2-diacyl-sn-glycero-3-phospho-(1'-sn-glycerol) = an S-1,2-diacyl-sn-glyceryl-L-cysteinyl-[prolipoprotein] + sn-glycerol 1-phosphate + H(+). Its pathway is protein modification; lipoprotein biosynthesis (diacylglyceryl transfer). Its function is as follows. Catalyzes the transfer of the diacylglyceryl group from phosphatidylglycerol to the sulfhydryl group of the N-terminal cysteine of a prolipoprotein, the first step in the formation of mature lipoproteins. This Erwinia tasmaniensis (strain DSM 17950 / CFBP 7177 / CIP 109463 / NCPPB 4357 / Et1/99) protein is Phosphatidylglycerol--prolipoprotein diacylglyceryl transferase.